The sequence spans 349 residues: MKTIKVLVVDDSAFMRKWISDFLSEHPRLEVIGTARNGREALEKIAALRPDVVTLDVEMPVMNGLETLQRIMRDHPVPVVMVSSTTTEGAENTIAAMQYGAVDFVAKPSGPISLDLYKVKDEMIGKVLHASEANVAALTAPRRQHPSWRPSFKAAARPQQAIVAIGTSTGGPRALETVLTQLPPDLAAPVVAVQHMPKGFTTSLANRLDALAAITVKEAEDGEVLQNGTAYIAPGGVHLIVREEGGALKARFDESPPRAGHRPAVDVLFESLAAIRLCRKIAVIMTGMGSDGTAGLKKLKESGNTKAIAEARETAVVFGMPRAAIEAGVVDVIVPLDSIAAAIVQLIGE.

The Response regulatory domain maps to 5 to 122 (KVLVVDDSAF…SLDLYKVKDE (118 aa)). D56 bears the 4-aspartylphosphate mark. Residues 156–349 (ARPQQAIVAI…AAAIVQLIGE (194 aa)) form the CheB-type methylesterase domain. Active-site residues include S168, H195, and D291.

This sequence belongs to the CheB family. Post-translationally, phosphorylated by CheA. Phosphorylation of the N-terminal regulatory domain activates the methylesterase activity.

The protein localises to the cytoplasm. The catalysed reaction is [protein]-L-glutamate 5-O-methyl ester + H2O = L-glutamyl-[protein] + methanol + H(+). It carries out the reaction L-glutaminyl-[protein] + H2O = L-glutamyl-[protein] + NH4(+). Functionally, involved in chemotaxis. Part of a chemotaxis signal transduction system that modulates chemotaxis in response to various stimuli. Catalyzes the demethylation of specific methylglutamate residues introduced into the chemoreceptors (methyl-accepting chemotaxis proteins or MCP) by CheR. Also mediates the irreversible deamidation of specific glutamine residues to glutamic acid. This is Protein-glutamate methylesterase/protein-glutamine glutaminase from Geobacillus kaustophilus (strain HTA426).